Reading from the N-terminus, the 579-residue chain is Isocitrate dehydrogenase kinase/phosphatase (579 aa).

ATP-binding positions include 324–330 (ADGTPGM) and Lys345. The active site involves Asp380.

The protein belongs to the AceK family.

The protein localises to the cytoplasm. It carries out the reaction L-seryl-[isocitrate dehydrogenase] + ATP = O-phospho-L-seryl-[isocitrate dehydrogenase] + ADP + H(+). In terms of biological role, bifunctional enzyme which can phosphorylate or dephosphorylate isocitrate dehydrogenase (IDH) on a specific serine residue. This is a regulatory mechanism which enables bacteria to bypass the Krebs cycle via the glyoxylate shunt in response to the source of carbon. When bacteria are grown on glucose, IDH is fully active and unphosphorylated, but when grown on acetate or ethanol, the activity of IDH declines drastically concomitant with its phosphorylation. This Xanthomonas campestris pv. campestris (strain 8004) protein is Isocitrate dehydrogenase kinase/phosphatase.